The chain runs to 387 residues: 3-ketoacyl-CoA thiolase (387 aa).

The Acyl-thioester intermediate role is filled by cysteine 91. Catalysis depends on proton acceptor residues histidine 343 and cysteine 373.

This sequence belongs to the thiolase-like superfamily. Thiolase family. As to quaternary structure, heterotetramer of two alpha chains (FadB) and two beta chains (FadA).

It localises to the cytoplasm. It catalyses the reaction an acyl-CoA + acetyl-CoA = a 3-oxoacyl-CoA + CoA. Its pathway is lipid metabolism; fatty acid beta-oxidation. Catalyzes the final step of fatty acid oxidation in which acetyl-CoA is released and the CoA ester of a fatty acid two carbons shorter is formed. This is 3-ketoacyl-CoA thiolase from Shewanella sp. (strain W3-18-1).